Reading from the N-terminus, the 539-residue chain is GMP synthase [glutamine-hydrolyzing] (539 aa).

In terms of domain architecture, Glutamine amidotransferase type-1 spans 4-202 (KVLILDFGSQ…VLEIAGAKPD (199 aa)). C81 serves as the catalytic Nucleophile. Active-site residues include H176 and E178. Residues 203 to 395 (WVMRDHIDEA…LGLPHEMVYR (193 aa)) enclose the GMPS ATP-PPase domain. An ATP-binding site is contributed by 230–236 (SGGVDSS).

As to quaternary structure, homodimer.

It catalyses the reaction XMP + L-glutamine + ATP + H2O = GMP + L-glutamate + AMP + diphosphate + 2 H(+). Its pathway is purine metabolism; GMP biosynthesis; GMP from XMP (L-Gln route): step 1/1. Functionally, catalyzes the synthesis of GMP from XMP. The protein is GMP synthase [glutamine-hydrolyzing] of Ralstonia pickettii (strain 12J).